The sequence spans 433 residues: Probable M18 family aminopeptidase 2 (433 aa).

Zn(2+) is bound by residues H79, H153, and H404.

This sequence belongs to the peptidase M18 family. Requires Zn(2+) as cofactor.

The chain is Probable M18 family aminopeptidase 2 (apeB) from Mycobacterium bovis (strain ATCC BAA-935 / AF2122/97).